A 187-amino-acid chain; its full sequence is Elongation factor P (187 aa).

This sequence belongs to the elongation factor P family.

The protein localises to the cytoplasm. It participates in protein biosynthesis; polypeptide chain elongation. Its function is as follows. Involved in peptide bond synthesis. Stimulates efficient translation and peptide-bond synthesis on native or reconstituted 70S ribosomes in vitro. Probably functions indirectly by altering the affinity of the ribosome for aminoacyl-tRNA, thus increasing their reactivity as acceptors for peptidyl transferase. The sequence is that of Elongation factor P from Arthrobacter sp. (strain FB24).